The following is a 155-amino-acid chain: MLKQVEIFTDGSCLGNPGPGGYGAILRYRGHEKTFSEGYTLTTNNRMELMAAIVALEALKEHCEVTLSTDSQYVRQGITQWIHNWKKRGWKTAEKKPVKNVDLWKRLDAALGQHQIKWVWVKGHAGHPENERCDELARAAAMNPTQEDSGYQAEA.

Residues methionine 1–methionine 142 enclose the RNase H type-1 domain. Aspartate 10, glutamate 48, aspartate 70, and aspartate 134 together coordinate Mg(2+).

Belongs to the RNase H family. Monomer. Requires Mg(2+) as cofactor.

The protein localises to the cytoplasm. The catalysed reaction is Endonucleolytic cleavage to 5'-phosphomonoester.. Its function is as follows. Endonuclease that specifically degrades the RNA of RNA-DNA hybrids. This is Ribonuclease H from Salmonella paratyphi A (strain AKU_12601).